The following is a 326-amino-acid chain: Target of rapamycin complex subunit lst8 (326 aa).

7 WD repeats span residues Met1–Thr37, His40–Asn80, Gly83–Gln122, Gln126–Leu165, Glu168–Val207, Ala218–Glu257, and Thr268–Ser309.

This sequence belongs to the WD repeat LST8 family. As to quaternary structure, part of the mechanistic target of rapamycin complex 1 (mTORC1) which contains MTOR, MLST8 and RPTOR. Component of the mechanistic target of rapamycin complex 2 (mTORC2), consisting in two heterotretramers composed of MTOR, MLST8, RICTOR and MAPKAP1/SIN1.

Its subcellular location is the lysosome membrane. It is found in the cytoplasm. Functionally, subunit of both mTORC1 and mTORC2, which regulates cell growth and survival in response to nutrient and hormonal signals. mTORC1 is activated in response to growth factors or amino acids. In response to nutrients, mTORC1 is recruited to the lysosome membrane and promotes protein, lipid and nucleotide synthesis by phosphorylating several substrates, such as ribosomal protein S6 kinase (RPS6KB1 and RPS6KB2) and EIF4EBP1 (4E-BP1). In the same time, it inhibits catabolic pathways by phosphorylating the autophagy initiation components ULK1 and ATG13, as well as transcription factor TFEB, a master regulators of lysosomal biogenesis and autophagy. The mTORC1 complex is inhibited in response to starvation and amino acid depletion. Within mTORC1, MLST8 interacts directly with MTOR and enhances its kinase activity. In nutrient-poor conditions, stabilizes the MTOR-RPTOR interaction and favors RPTOR-mediated inhibition of MTOR activity. As part of the mTORC2 complex, transduces signals from growth factors to pathways involved in proliferation, cytoskeletal organization, lipogenesis and anabolic output. mTORC2 is also activated by growth factors, but seems to be nutrient-insensitive. In response to growth factors, mTORC2 phosphorylates and activates AGC protein kinase family members, including AKT (AKT1, AKT2 and AKT3), PKC (PRKCA, PRKCB and PRKCE) and SGK1. mTORC2 functions upstream of Rho GTPases to regulate the actin cytoskeleton, probably by activating one or more Rho-type guanine nucleotide exchange factors. mTORC2 promotes the serum-induced formation of stress-fibers or F-actin. Within mTORC2, MLST8 acts as a bridge between MAPKAP1/SIN1 and MTOR. This Danio rerio (Zebrafish) protein is Target of rapamycin complex subunit lst8 (mlst8).